The primary structure comprises 540 residues: Extracellular matrix protein 1 (540 aa).

The signal sequence occupies residues 1-19 (MGTTARAALVLTYLAVASA). 2 disordered regions span residues 41–85 (VGYA…EATP) and 120–175 (LQHP…PSPD). 2 stretches are compositionally biased toward polar residues: residues 71 to 85 (GQSQ…EATP) and 146 to 156 (NAAQHCQQDRS). 2 repeat units span residues 150–279 (HCQQ…QPHY) and 283–405 (ACPS…YPNY). The segment at 150-405 (HCQQDRSQGG…FARRAPYPNY (256 aa)) is 2 X approximate repeats. Asn-354 carries N-linked (GlcNAc...) asparagine glycosylation. An N-linked (GlcNAc...) (complex) asparagine glycan is attached at Asn-444. The interval 515–540 (ENAKGQGEQGSTGGTNISSTSEPKEE) is disordered. Low complexity predominate over residues 528–540 (GTNISSTSEPKEE). N-linked (GlcNAc...) asparagine glycosylation is present at Asn-530.

As to quaternary structure, interacts (via C-terminus) with HSPG2 (via C-terminus). Interacts with EFEMP1/FBLN3 and LAMB3. Interacts with MMP9. In terms of tissue distribution, expressed in breast cancer tissues. Little or no expression observed in normal breast tissues. Expressed in skin; wide expression is observed throughout the dermis with minimal expression in the epidermis.

Its subcellular location is the secreted. It is found in the extracellular space. The protein resides in the extracellular matrix. In terms of biological role, involved in endochondral bone formation as negative regulator of bone mineralization. Stimulates the proliferation of endothelial cells and promotes angiogenesis. Inhibits MMP9 proteolytic activity. The protein is Extracellular matrix protein 1 (ECM1) of Homo sapiens (Human).